A 109-amino-acid chain; its full sequence is Ycf20-like protein (109 aa).

The protein belongs to the ycf20 family.

This chain is Ycf20-like protein, found in Synechocystis sp. (strain ATCC 27184 / PCC 6803 / Kazusa).